The chain runs to 728 residues: Probable subtilase-type serine protease DR_A0283 (728 aa).

A signal peptide spans 1-22 (MPGALPMKKISLAVLSLTTLLA). Positions 23–148 (ACGQPQTSPQ…RTAQDQLGAQ (126 aa)) are excised as a propeptide. A Peptidase S8 domain is found at 159–471 (QYALDSNHLH…YGLIRMDKLA (313 aa)). Catalysis depends on charge relay system residues Asp188, His242, and Ser412.

Belongs to the peptidase S8 family.

Its subcellular location is the secreted. This chain is Probable subtilase-type serine protease DR_A0283, found in Deinococcus radiodurans (strain ATCC 13939 / DSM 20539 / JCM 16871 / CCUG 27074 / LMG 4051 / NBRC 15346 / NCIMB 9279 / VKM B-1422 / R1).